The sequence spans 50 residues: Photosystem II reaction center protein M (50 aa).

Residues 7 to 27 (GFIASLLFVGVPTIFLIGLFI) form a helical membrane-spanning segment.

Belongs to the PsbM family. PSII is composed of 1 copy each of membrane proteins PsbA, PsbB, PsbC, PsbD, PsbE, PsbF, PsbH, PsbI, PsbJ, PsbK, PsbL, PsbM, PsbT, PsbX, PsbY, Psb30/Ycf12, peripheral proteins PsbO, CyanoQ (PsbQ), PsbU, PsbV and a large number of cofactors. It forms dimeric complexes.

It localises to the cellular thylakoid membrane. In terms of biological role, one of the components of the core complex of photosystem II (PSII). PSII is a light-driven water:plastoquinone oxidoreductase that uses light energy to abstract electrons from H(2)O, generating O(2) and a proton gradient subsequently used for ATP formation. It consists of a core antenna complex that captures photons, and an electron transfer chain that converts photonic excitation into a charge separation. This subunit is found at the monomer-monomer interface. The chain is Photosystem II reaction center protein M from Prochlorococcus marinus (strain MIT 9312).